Here is a 145-residue protein sequence, read N- to C-terminus: UPF0179 protein MmarC7_0952 (145 aa).

It belongs to the UPF0179 family.

In Methanococcus maripaludis (strain C7 / ATCC BAA-1331), this protein is UPF0179 protein MmarC7_0952.